The chain runs to 428 residues: 3-phosphoshikimate 1-carboxyvinyltransferase (428 aa).

Lysine 22, serine 23, and arginine 27 together coordinate 3-phosphoshikimate. Residue lysine 22 participates in phosphoenolpyruvate binding. Residues glycine 96 and arginine 124 each contribute to the phosphoenolpyruvate site. Residues serine 169, serine 170, glutamine 171, serine 197, aspartate 313, asparagine 336, and lysine 340 each contribute to the 3-phosphoshikimate site. Phosphoenolpyruvate is bound at residue glutamine 171. The active-site Proton acceptor is the aspartate 313. Residues arginine 344, arginine 386, and lysine 411 each contribute to the phosphoenolpyruvate site.

Belongs to the EPSP synthase family. In terms of assembly, monomer.

Its subcellular location is the cytoplasm. It carries out the reaction 3-phosphoshikimate + phosphoenolpyruvate = 5-O-(1-carboxyvinyl)-3-phosphoshikimate + phosphate. It functions in the pathway metabolic intermediate biosynthesis; chorismate biosynthesis; chorismate from D-erythrose 4-phosphate and phosphoenolpyruvate: step 6/7. Catalyzes the transfer of the enolpyruvyl moiety of phosphoenolpyruvate (PEP) to the 5-hydroxyl of shikimate-3-phosphate (S3P) to produce enolpyruvyl shikimate-3-phosphate and inorganic phosphate. The polypeptide is 3-phosphoshikimate 1-carboxyvinyltransferase (Xenorhabdus nematophila (strain ATCC 19061 / DSM 3370 / CCUG 14189 / LMG 1036 / NCIMB 9965 / AN6)).